Here is a 308-residue protein sequence, read N- to C-terminus: NADH-cytochrome b5 reductase 1 (308 aa).

The helical transmembrane segment at 29–49 (VASSPAFLVAAAAIVIAAAFY) threads the bilayer. One can recognise an FAD-binding FR-type domain in the interval 64-167 (SIWKEFPLQK…KGPKGNFKYT (104 aa)). Residues 147-162 (ASLK…GPKG) and 173-205 (HLGM…NITL) each bind FAD.

This sequence belongs to the flavoprotein pyridine nucleotide cytochrome reductase family. In terms of assembly, monomer. Component of the 2-(3-amino-3-carboxypropyl)histidine synthase complex composed of DPH1, DPH2, DPH3 and a NADH-dependent reductase, predominantly MCR1.1. Requires FAD as cofactor.

Its subcellular location is the mitochondrion outer membrane. It catalyses the reaction 2 Fe(III)-[cytochrome b5] + NADH = 2 Fe(II)-[cytochrome b5] + NAD(+) + H(+). It carries out the reaction 2 Fe(3+)-[Dph3] + NADH = 2 Fe(2+)-[Dph3] + NAD(+) + H(+). It functions in the pathway protein modification; peptidyl-diphthamide biosynthesis. In terms of biological role, NADH-dependent reductase for DPH3 and cytochrome b5. Required for the first step of diphthamide biosynthesis, a post-translational modification of histidine which occurs in elongation factor 2. DPH1 and DPH2 transfer a 3-amino-3-carboxypropyl (ACP) group from S-adenosyl-L-methionine (SAM) to a histidine residue, the reaction is assisted by a reduction system comprising DPH3 and a NADH-dependent reductase, predominantly MCR1.1. By reducing DPH3, also involved in the formation of the tRNA wobble base modification mcm5s 2U (5-methoxycarbonylmethyl-2-thiouridine), mediated by the elongator complex. The cytochrome b5/NADH cytochrome b5 reductase electron transfer system supports the catalytic activity of several sterol biosynthetic enzymes. This Laccaria bicolor (strain S238N-H82 / ATCC MYA-4686) (Bicoloured deceiver) protein is NADH-cytochrome b5 reductase 1 (MCR1.1).